A 197-amino-acid polypeptide reads, in one-letter code: HTH-type transcriptional regulator BetI (197 aa).

An HTH tetR-type domain is found at 8-68; it reads PIRRQQLIEA…ATMRYLMSVL (61 aa). Residues 31 to 50 constitute a DNA-binding region (H-T-H motif); the sequence is SIALIARLAGVSNGIISHYF.

It participates in amine and polyamine biosynthesis; betaine biosynthesis via choline pathway [regulation]. Functionally, repressor involved in the biosynthesis of the osmoprotectant glycine betaine. It represses transcription of the choline transporter BetT and the genes of BetAB involved in the synthesis of glycine betaine. The sequence is that of HTH-type transcriptional regulator BetI from Pseudomonas fluorescens (strain Pf0-1).